We begin with the raw amino-acid sequence, 319 residues long: tRNA N6-adenosine threonylcarbamoyltransferase (319 aa).

Residues H110 and H114 each coordinate Fe cation. Residues 132–136 (VVSGG), D165, G178, D182, and N271 contribute to the substrate site. Fe cation is bound at residue D300.

Belongs to the KAE1 / TsaD family. Requires Fe(2+) as cofactor.

It localises to the cytoplasm. The enzyme catalyses L-threonylcarbamoyladenylate + adenosine(37) in tRNA = N(6)-L-threonylcarbamoyladenosine(37) in tRNA + AMP + H(+). In terms of biological role, required for the formation of a threonylcarbamoyl group on adenosine at position 37 (t(6)A37) in tRNAs that read codons beginning with adenine. Is involved in the transfer of the threonylcarbamoyl moiety of threonylcarbamoyl-AMP (TC-AMP) to the N6 group of A37, together with TsaE and TsaB. TsaD likely plays a direct catalytic role in this reaction. The chain is tRNA N6-adenosine threonylcarbamoyltransferase from Mycoplasma capricolum subsp. capricolum (strain California kid / ATCC 27343 / NCTC 10154).